A 96-amino-acid polypeptide reads, in one-letter code: Large ribosomal subunit protein bL28 (96 aa).

It belongs to the bacterial ribosomal protein bL28 family.

This chain is Large ribosomal subunit protein bL28, found in Methylobacterium sp. (strain 4-46).